The following is a 273-amino-acid chain: 4-hydroxy-tetrahydrodipicolinate reductase (273 aa).

NAD(+)-binding positions include 11–16 and glutamate 36; that span reads GAGGRM. Arginine 37 lines the NADP(+) pocket. Residues 100–102 and 124–127 each bind NAD(+); these read GTT and AANY. The Proton donor/acceptor role is filled by histidine 157. (S)-2,3,4,5-tetrahydrodipicolinate is bound at residue histidine 158. Lysine 161 serves as the catalytic Proton donor. 167–168 lines the (S)-2,3,4,5-tetrahydrodipicolinate pocket; it reads GT.

Belongs to the DapB family.

The protein resides in the cytoplasm. The enzyme catalyses (S)-2,3,4,5-tetrahydrodipicolinate + NAD(+) + H2O = (2S,4S)-4-hydroxy-2,3,4,5-tetrahydrodipicolinate + NADH + H(+). The catalysed reaction is (S)-2,3,4,5-tetrahydrodipicolinate + NADP(+) + H2O = (2S,4S)-4-hydroxy-2,3,4,5-tetrahydrodipicolinate + NADPH + H(+). The protein operates within amino-acid biosynthesis; L-lysine biosynthesis via DAP pathway; (S)-tetrahydrodipicolinate from L-aspartate: step 4/4. Catalyzes the conversion of 4-hydroxy-tetrahydrodipicolinate (HTPA) to tetrahydrodipicolinate. This Acinetobacter baumannii (strain ACICU) protein is 4-hydroxy-tetrahydrodipicolinate reductase.